A 99-amino-acid chain; its full sequence is DNA-binding protein Fis (99 aa).

The segment at residues 75 to 94 is a DNA-binding region (H-T-H motif); it reads QTRAATMLGINRGTLRKKLK.

This sequence belongs to the transcriptional regulatory Fis family. In terms of assembly, homodimer.

Its function is as follows. Activates ribosomal RNA transcription. Plays a direct role in upstream activation of rRNA promoters. The protein is DNA-binding protein Fis of Pasteurella multocida (strain Pm70).